Here is a 126-residue protein sequence, read N- to C-terminus: Aspartate 1-decarboxylase (126 aa).

Residue Ser25 is the Schiff-base intermediate with substrate; via pyruvic acid of the active site. Ser25 is subject to Pyruvic acid (Ser). Residue Thr57 coordinates substrate. The active-site Proton donor is Tyr58. Residue 73 to 75 (GAA) participates in substrate binding.

It belongs to the PanD family. Heterooctamer of four alpha and four beta subunits. It depends on pyruvate as a cofactor. In terms of processing, is synthesized initially as an inactive proenzyme, which is activated by self-cleavage at a specific serine bond to produce a beta-subunit with a hydroxyl group at its C-terminus and an alpha-subunit with a pyruvoyl group at its N-terminus.

The protein localises to the cytoplasm. It catalyses the reaction L-aspartate + H(+) = beta-alanine + CO2. Its pathway is cofactor biosynthesis; (R)-pantothenate biosynthesis; beta-alanine from L-aspartate: step 1/1. Catalyzes the pyruvoyl-dependent decarboxylation of aspartate to produce beta-alanine. The polypeptide is Aspartate 1-decarboxylase (Cronobacter sakazakii (strain ATCC BAA-894) (Enterobacter sakazakii)).